The following is a 962-amino-acid chain: pH-response regulator protein palF/prr-3 (962 aa).

4 disordered regions span residues 1-43 (MGPF…DSST), 225-326 (APPK…THPS), 568-675 (TDSN…PDEN), and 689-962 (RLLP…RYER). Residues 237 to 246 (ISKRAKKKRP) show a composition bias toward basic residues. Composition is skewed to polar residues over residues 297-307 (GFSQAPRSVSH), 314-326 (SGDS…THPS), and 581-596 (PSLT…SNYV). Low complexity-rich tracts occupy residues 696–722 (PIAA…PDSS) and 738–747 (PTPAATPATA). The segment covering 793 to 805 (TEDKQELERRRLL) has biased composition (basic and acidic residues). Over residues 830–839 (AGPSGSRAGP) the composition is skewed to low complexity. Pro residues predominate over residues 840 to 849 (SAPPPAPPVA). The segment covering 913–928 (PSSPVLAPASAFFPAS) has biased composition (low complexity). Over residues 929-949 (GSGNVHDSPREQGQQARSDSS) the composition is skewed to polar residues.

Belongs to the arrestin family. PalF/RIM8 subfamily.

Required for the proteolytic cleavage of the transcription factor pacc-1 in response to alkaline ambient pH. This chain is pH-response regulator protein palF/prr-3 (prr-3), found in Neurospora crassa (strain ATCC 24698 / 74-OR23-1A / CBS 708.71 / DSM 1257 / FGSC 987).